A 1914-amino-acid chain; its full sequence is Myosin light chain kinase, smooth muscle (1914 aa).

Glycine 2 bears the N-acetylalanine mark. 2 consecutive Ig-like C2-type domains span residues 33–122 and 161–249; these read PAFI…VELT and PKFA…AELS. A disulfide bond links cysteine 182 and cysteine 233. Tyrosine 231 is subject to Phosphotyrosine; by ABL1. The tract at residues 286–393 is disordered; sequence DSLEAAAKSK…TRQPGLGSQD (108 aa). The residue at position 305 (serine 305) is a Phosphoserine. A compositionally biased stretch (basic and acidic residues) spans 318–329; that stretch reads RESKLESCKDSP. The segment covering 331-347 has biased composition (polar residues); sequence TAPQTPVLQKTSSSITL. Residues serine 343 and serine 365 each carry the phosphoserine modification. Ig-like C2-type domains follow at residues 414–503 and 514–599; these read PKFE…WTLQ and PSFS…AWVT. 2 disulfide bridges follow: cysteine 435–cysteine 487 and cysteine 535–cysteine 583. Tyrosine 464 bears the Phosphotyrosine; by ABL1 and SRC mark. A Phosphotyrosine; by SRC modification is found at tyrosine 471. Position 556 is a phosphotyrosine; by ABL1 (tyrosine 556). N6-acetyllysine is present on lysine 608. Tyrosine 611 is subject to Phosphotyrosine; by ABL1. 2 Ig-like C2-type domains span residues 620–711 and 721–821; these read PTAP…AVLT and PWFI…ALPR. An intrachain disulfide couples cysteine 742 to cysteine 805. Tyrosine 792 and tyrosine 846 each carry phosphotyrosine; by ABL1. A run of 4 repeats spans residues 868–895, 896–923, 924–951, and 952–979. Positions 868 to 998 are 5 X 28 AA approximate tandem repeats; it reads DVRGVLKRRV…KKLPAENGSS (131 aa). The segment at 923–963 is actin-binding (calcium/calmodulin-sensitive); that stretch reads MDFRANLQRQVKPKTVSEEERKVHSPQQVDFRSVLAKKGTS. The segment at 932 to 1098 is disordered; that stretch reads QVKPKTVSEE…KRSESQGTAP (167 aa). A Phosphoserine modification is found at serine 947. The segment at 948–963 is calmodulin-binding; the sequence is PQQVDFRSVLAKKGTS. Residues 980-998 form a 1-5; truncated repeat; that stretch reads DFRSVLGGKKKLPAENGSS. Residues 999–1003 form a 2-1; truncated repeat; the sequence is SAETL. The tract at residues 999 to 1063 is 6 X 12 AA approximate tandem repeats; that stretch reads SAETLNAKAV…KPDENLKSAS (65 aa). A run of 5 repeats spans residues 1004–1015, 1016–1027, 1028–1039, 1040–1051, and 1052–1063. Positions 1054-1077 are enriched in basic and acidic residues; sequence KPDENLKSASKEELKKDVKNDVNC. The tract at residues 1061–1460 is actin-binding (calcium/calmodulin-insensitive); sequence SASKEELKKD…TVTINTEQKV (400 aa). An Ig-like C2-type 7 domain is found at 1098–1186; the sequence is PAFKQKLQDV…GQAECSCQVT (89 aa). Cysteine 1119 and cysteine 1170 are disulfide-bonded. Residues 1192-1237 are disordered; the sequence is ASENTKAPEMKSRRPKSSLPPVLGTESDATVKKKPAPKTPPKAAMP. An Ig-like C2-type 8 domain is found at 1238-1326; sequence PQIIQFPEDQ…GSRQAQVNLT (89 aa). The region spanning 1334–1426 is the Fibronectin type-III domain; it reads PAGTPCASDI…QESELTTVGE (93 aa). Residues 1413-1422 show a composition bias toward polar residues; that stretch reads SEPSQESELT. Residues 1413 to 1446 are disordered; that stretch reads SEPSQESELTTVGEKPEEPKDEVEVSDDDEKEPE. The segment covering 1431 to 1445 has biased composition (acidic residues); it reads PKDEVEVSDDDEKEP. Residue serine 1438 is modified to Phosphoserine. A Phosphotyrosine; by ABL1 modification is found at tyrosine 1449. In terms of domain architecture, Protein kinase spans 1464 to 1719; it reads YDIEERLGSG…CTQCLQHPWL (256 aa). ATP is bound by residues 1470–1478 and lysine 1493; that span reads LGSGKFGQV. Phosphotyrosine; by ABL1 is present on tyrosine 1575. The active-site Proton acceptor is aspartate 1585. Tyrosine 1635 carries the phosphotyrosine; by ABL1 modification. The interval 1711-1774 is calmodulin-binding; it reads TQCLQHPWLM…SGLSGRKSST (64 aa). A phosphoserine mark is found at serine 1759, serine 1760, serine 1772, serine 1773, and serine 1776. A disordered region spans residues 1767-1787; the sequence is LSGRKSSTGSPTSPLNAEKLE. Polar residues predominate over residues 1770–1781; it reads RKSSTGSPTSPL. Phosphothreonine is present on threonine 1778. At serine 1779 the chain carries Phosphoserine. The Ig-like C2-type 9 domain maps to 1809–1898; it reads PYFSKTIRDL…GEATCTAELI (90 aa). Cysteine 1830 and cysteine 1882 are disulfide-bonded.

Belongs to the protein kinase superfamily. CAMK Ser/Thr protein kinase family. In terms of assembly, all isoforms including Telokin bind calmodulin. Interacts with SVIL. Interacts with CTTN; this interaction is reduced during thrombin-induced endothelial cell (EC) contraction but is promoted by the barrier-protective agonist sphingosine 1-phosphate (S1P) within lamellipodia. A complex made of ABL1, CTTN and MYLK regulates cortical actin-based cytoskeletal rearrangement critical to sphingosine 1-phosphate (S1P)-mediated endothelial cell (EC) barrier enhancement. Binds to NAA10/ARD1 and PTK2B/PYK2. Requires Mg(2+) as cofactor. The cofactor is Ca(2+). Post-translationally, can probably be down-regulated by phosphorylation. Tyrosine phosphorylation by ABL1 increases kinase activity, reverses MLCK-mediated inhibition of Arp2/3-mediated actin polymerization, and enhances CTTN-binding. Phosphorylation by SRC at Tyr-464 and Tyr-471 promotes CTTN binding. The C-terminus is deglutamylated by AGTPBP1/CCP1, AGBL1/CCP4 and AGBL4/CCP6, leading to the formation of Myosin light chain kinase, smooth muscle, deglutamylated form. The consequences of C-terminal deglutamylation are unknown. In terms of processing, acetylated at Lys-608 by NAA10/ARD1 via a calcium-dependent signaling; this acetylation represses kinase activity and reduces tumor cell migration. In terms of tissue distribution, smooth muscle and non-muscle isozymes are expressed in a wide variety of adult and fetal tissues and in cultured endothelium with qualitative expression appearing to be neither tissue- nor development-specific. Non-muscle isoform 2 is the dominant splice variant expressed in various tissues. Telokin has been found in a wide variety of adult and fetal tissues. Accumulates in well differentiated enterocytes of the intestinal epithelium in response to tumor necrosis factor (TNF).

Its subcellular location is the cytoplasm. It localises to the cell projection. The protein resides in the lamellipodium. The protein localises to the cleavage furrow. It is found in the cytoskeleton. Its subcellular location is the stress fiber. It carries out the reaction L-seryl-[myosin light chain] + ATP = O-phospho-L-seryl-[myosin light chain] + ADP + H(+). The catalysed reaction is L-threonyl-[myosin light chain] + ATP = O-phospho-L-threonyl-[myosin light chain] + ADP + H(+). With respect to regulation, isoform 1 is activated by phosphorylation on Tyr-464 and Tyr-471. Isoforms which lack these tyrosine residues are not regulated in this way. All catalytically active isoforms require binding to calcium and calmodulin for activation. Repressed by organometallic pyridylnaphthalimide complexes, wortmannin, ML-7 (a synthetic naphthalenesulphonyl derivative that inhibits the binding of ATP to MLCK) and ML-9. Functionally, calcium/calmodulin-dependent myosin light chain kinase implicated in smooth muscle contraction via phosphorylation of myosin light chains (MLC). Also regulates actin-myosin interaction through a non-kinase activity. Phosphorylates PTK2B/PYK2 and myosin light-chains. Involved in the inflammatory response (e.g. apoptosis, vascular permeability, leukocyte diapedesis), cell motility and morphology, airway hyperreactivity and other activities relevant to asthma. Required for tonic airway smooth muscle contraction that is necessary for physiological and asthmatic airway resistance. Necessary for gastrointestinal motility. Implicated in the regulation of endothelial as well as vascular permeability, probably via the regulation of cytoskeletal rearrangements. In the nervous system it has been shown to control the growth initiation of astrocytic processes in culture and to participate in transmitter release at synapses formed between cultured sympathetic ganglion cells. Critical participant in signaling sequences that result in fibroblast apoptosis. Plays a role in the regulation of epithelial cell survival. Required for epithelial wound healing, especially during actomyosin ring contraction during purse-string wound closure. Mediates RhoA-dependent membrane blebbing. Triggers TRPC5 channel activity in a calcium-dependent signaling, by inducing its subcellular localization at the plasma membrane. Promotes cell migration (including tumor cells) and tumor metastasis. PTK2B/PYK2 activation by phosphorylation mediates ITGB2 activation and is thus essential to trigger neutrophil transmigration during acute lung injury (ALI). May regulate optic nerve head astrocyte migration. Probably involved in mitotic cytoskeletal regulation. Regulates tight junction probably by modulating ZO-1 exchange in the perijunctional actomyosin ring. Mediates burn-induced microvascular barrier injury; triggers endothelial contraction in the development of microvascular hyperpermeability by phosphorylating MLC. Essential for intestinal barrier dysfunction. Mediates Giardia spp.-mediated reduced epithelial barrier function during giardiasis intestinal infection via reorganization of cytoskeletal F-actin and tight junctional ZO-1. Necessary for hypotonicity-induced Ca(2+) entry and subsequent activation of volume-sensitive organic osmolyte/anion channels (VSOAC) in cervical cancer cells. Responsible for high proliferative ability of breast cancer cells through anti-apoptosis. This is Myosin light chain kinase, smooth muscle from Homo sapiens (Human).